The primary structure comprises 197 residues: Na(+)-translocating NADH-quinone reductase subunit E (197 aa).

The next 6 membrane-spanning stretches (helical) occupy residues 11–31 (SVFIENMALSFFLGMCTFLAV), 35–55 (VSTAFGLGVAVIFVLGLSVPA), 76–96 (FLKFITFIGVIAALVQILEMF), 108–128 (LGIYLPLITVNCAIFGAVSFM), 139–159 (VVYGFGAGLGWMLAIVALAGI), and 175–195 (LGITFIAAGLMAMAFMSFSGI).

Belongs to the NqrDE/RnfAE family. In terms of assembly, composed of six subunits; NqrA, NqrB, NqrC, NqrD, NqrE and NqrF.

The protein localises to the cell inner membrane. The catalysed reaction is a ubiquinone + n Na(+)(in) + NADH + H(+) = a ubiquinol + n Na(+)(out) + NAD(+). NQR complex catalyzes the reduction of ubiquinone-1 to ubiquinol by two successive reactions, coupled with the transport of Na(+) ions from the cytoplasm to the periplasm. NqrA to NqrE are probably involved in the second step, the conversion of ubisemiquinone to ubiquinol. This is Na(+)-translocating NADH-quinone reductase subunit E from Neisseria meningitidis serogroup A / serotype 4A (strain DSM 15465 / Z2491).